Consider the following 82-residue polypeptide: Sulfur carrier protein TusA (82 aa).

The Cysteine persulfide intermediate role is filled by C19.

This sequence belongs to the sulfur carrier protein TusA family.

The protein resides in the cytoplasm. In terms of biological role, sulfur carrier protein which probably makes part of a sulfur-relay system. The protein is Sulfur carrier protein TusA of Vibrio cholerae serotype O1 (strain ATCC 39541 / Classical Ogawa 395 / O395).